A 422-amino-acid chain; its full sequence is Enolase (422 aa).

A (2R)-2-phosphoglycerate-binding site is contributed by Q162. The Proton donor role is filled by E204. Mg(2+) is bound by residues D241, E284, and D311. K336, R365, S366, and K387 together coordinate (2R)-2-phosphoglycerate. K336 acts as the Proton acceptor in catalysis.

Belongs to the enolase family. Mg(2+) serves as cofactor.

It is found in the cytoplasm. The protein localises to the secreted. Its subcellular location is the cell surface. It catalyses the reaction (2R)-2-phosphoglycerate = phosphoenolpyruvate + H2O. The protein operates within carbohydrate degradation; glycolysis; pyruvate from D-glyceraldehyde 3-phosphate: step 4/5. Its function is as follows. Catalyzes the reversible conversion of 2-phosphoglycerate (2-PG) into phosphoenolpyruvate (PEP). It is essential for the degradation of carbohydrates via glycolysis. The polypeptide is Enolase (Bartonella quintana (strain Toulouse) (Rochalimaea quintana)).